A 447-amino-acid chain; its full sequence is Rab GDP dissociation inhibitor alpha (447 aa).

Ser-427 is subject to Phosphoserine.

The protein belongs to the Rab GDI family. Interacts with RHOH. Interacts with the non-phosphorylated forms of RAB1A, RAB3A, RAB5A, RAB5B, RAB5C, RAB8A, RAB8B, RAB12, RAB35, and RAB43. Interacts with RAB10. As to expression, high expression in brain, lower in other tissues.

Its subcellular location is the cytoplasm. The protein resides in the golgi apparatus. It localises to the trans-Golgi network. In terms of biological role, regulates the GDP/GTP exchange reaction of most Rab proteins by inhibiting the dissociation of GDP from them, and the subsequent binding of GTP to them. Promotes the dissociation of GDP-bound Rab proteins from the membrane and inhibits their activation. Promotes the dissociation of RAB1A, RAB3A, RAB5A and RAB10 from membranes. In Mus musculus (Mouse), this protein is Rab GDP dissociation inhibitor alpha (Gdi1).